The primary structure comprises 170 residues: Large ribosomal subunit protein uL6m (170 aa).

This sequence belongs to the universal ribosomal protein uL6 family.

The protein localises to the mitochondrion. This chain is Large ribosomal subunit protein uL6m (mrpl6), found in Dictyostelium discoideum (Social amoeba).